The following is a 388-amino-acid chain: Pepsin A-2/A-3 (388 aa).

An N-terminal signal peptide occupies residues 1 to 15; that stretch reads MKWLLLLGLVALSEC. 2 consecutive propeptides (activation peptide) follow at residues 16–40 and 41–62; these read IIHK…LLKD and FLKK…APTL. The 310-residue stretch at 76–385 folds into the Peptidase A1 domain; that stretch reads YFGTIGIGTP…DRANNQVGLA (310 aa). Asp94 is a catalytic residue. Cysteines 107 and 112 form a disulfide. Ser130 carries the phosphoserine modification. Cysteines 268 and 272 form a disulfide. The active site involves Asp277. Cys311 and Cys344 are joined by a disulfide.

The protein belongs to the peptidase A1 family. Post-translationally, pepsin A-2 is phosphorylated, but not pepsin A-3. Each pepsinogen is converted to corresponding pepsin at pH 2.0 in part as a result of the release of a 47 AA activation segment and in part as a result of stepwise proteolytic cleavage via an intermediate form(s).

The protein resides in the secreted. The catalysed reaction is Preferential cleavage: hydrophobic, preferably aromatic, residues in P1 and P1' positions. Cleaves 1-Phe-|-Val-2, 4-Gln-|-His-5, 13-Glu-|-Ala-14, 14-Ala-|-Leu-15, 15-Leu-|-Tyr-16, 16-Tyr-|-Leu-17, 23-Gly-|-Phe-24, 24-Phe-|-Phe-25 and 25-Phe-|-Tyr-26 bonds in the B chain of insulin.. Shows particularly broad specificity; although bonds involving phenylalanine and leucine are preferred, many others are also cleaved to some extent. This is Pepsin A-2/A-3 from Macaca fuscata fuscata (Japanese macaque).